The chain runs to 67 residues: Large ribosomal subunit protein bL35 (67 aa).

The protein belongs to the bacterial ribosomal protein bL35 family.

The chain is Large ribosomal subunit protein bL35 from Gloeothece citriformis (strain PCC 7424) (Cyanothece sp. (strain PCC 7424)).